The chain runs to 126 residues: MFS14 protein (126 aa).

Residues 1-23 constitute a signal peptide (or 24, or 26); sequence MALEAATAPRALLAACLVLLVLG.

As to expression, enhanced expression in male flowers. Accumulates in the tapetum.

The sequence is that of MFS14 protein (MFS14) from Zea mays (Maize).